We begin with the raw amino-acid sequence, 329 residues long: Gamma-resorcylate decarboxylase (329 aa).

Zn(2+) contacts are provided by glutamate 8, histidine 10, histidine 167, and aspartate 290. Aspartate 290 is an active-site residue.

Belongs to the metallo-dependent hydrolases superfamily. ACMSD family. Zn(2+) is required as a cofactor.

It carries out the reaction 2,6-dihydroxybenzoate + H(+) = resorcinol + CO2. Its pathway is aromatic compound metabolism. Its function is as follows. Involved in the gamma-resorcylate (2,6-dihydroxybenzoate) catabolism. Catalyzes the reversible decarboxylation of gamma-resorcylate to resorcinol. In Rhodococcus jostii (strain RHA1), this protein is Gamma-resorcylate decarboxylase.